The following is a 1428-amino-acid chain: Gag-Pol polyprotein (1428 aa).

Gly-2 is lipidated: N-myristoyl glycine; by host. The interval 7 to 31 is interaction with Gp41; that stretch reads VLSGKKLDSWEKIRLRPGGNKKYRL. The segment at 8-43 is interaction with host CALM1; sequence LSGKKLDSWEKIRLRPGGNKKYRLKHLVWASRELEK. The tract at residues 12–19 is interaction with host AP3D1; the sequence is KLDSWEKI. The interval 14-33 is interaction with membrane phosphatidylinositol 4,5-bisphosphate and RNA; the sequence is DSWEKIRLRPGGNKKYRLKH. The short motif at 16–22 is the Nuclear export signal element; sequence WEKIRLR. A Nuclear localization signal motif is present at residues 26-32; sequence NKKYRLK. An interaction with membrane phosphatidylinositol 4,5-bisphosphate region spans residues 73–77; the sequence is EELRS. The disordered stretch occupies residues 108–130; the sequence is QNKNKQRTQQAAANTGSSQNYPI. A compositionally biased stretch (polar residues) spans 114–130; that stretch reads RTQQAAANTGSSQNYPI. Tyr-128 bears the Phosphotyrosine; by host mark. The tract at residues 185-223 is interaction with human PPIA/CYPA and NUP153; that stretch reads NVVGGHQAAMQMLKDTINEEAAEWDRLHPVHAGPIPPGQ. The segment at 273 to 359 is dimerization/Multimerization of capsid protein p24; that stretch reads YSPVSILDIR…GGPGHKARVL (87 aa). 2 CCHC-type zinc fingers span residues 384–401 and 405–422; these read IKCFNCGKEGHLAKNCRA and KGCWKCGKEGHQMKDCTE. The tract at residues 438 to 475 is disordered; the sequence is EAREFSSEQTRANSPTSRNLWDGGKDDLPCETGAERQG. Residues 444 to 456 are compositionally biased toward polar residues; it reads SEQTRANSPTSRN. Residues 460–475 show a composition bias toward basic and acidic residues; it reads GGKDDLPCETGAERQG. The segment at 482–486 is dimerization of protease; it reads PQITL. In terms of domain architecture, Peptidase A2 spans 501–570; it reads IEALLDTGAD…TPVNIIGRNM (70 aa). Residue Asp-506 is the For protease activity; shared with dimeric partner of the active site. Dimerization of protease stretches follow at residues 530-536 and 569-581; these read GIGGFIK and NMLTQIGCTLNFP. Residues 624–814 form the Reverse transcriptase domain; it reads EGKISKIGPE…PPFLWMGYEL (191 aa). 3 residues coordinate Mg(2+): Asp-690, Asp-765, and Asp-766. The segment at 807–815 is RT 'primer grip'; sequence FLWMGYELH. A Tryptophan repeat motif motif is present at residues 978–994; that stretch reads WEAWWMEYWQATWIPEW. In terms of domain architecture, RNase H type-1 spans 1014-1137; the sequence is IAGAETFYVD…VDKLVSSGIR (124 aa). Residues Asp-1023, Glu-1058, Asp-1078, and Asp-1129 each contribute to the Mg(2+) site. The Integrase-type zinc finger occupies 1143 to 1184; sequence DGIDKAQEDHEKYHCNWRAMASDFNLPPVVAKEIVASCNKCQ. Zn(2+) is bound by residues His-1152, His-1156, Cys-1180, and Cys-1183. In terms of domain architecture, Integrase catalytic spans 1194–1344; that stretch reads VDCSPGIWQL…SAGERIIDII (151 aa). Positions 1204, 1256, and 1292 each coordinate Mg(2+). The integrase-type DNA-binding region spans 1363-1410; it reads FRVYYRDSRDPIWKGPAKLLWKGEGAVVIQDNSDIKVVPRRKAKIIRD.

As to quaternary structure, homotrimer; further assembles as hexamers of trimers. Interacts with gp41 (via C-terminus). Interacts with host CALM1; this interaction induces a conformational change in the Matrix protein, triggering exposure of the myristate group. Interacts with host AP3D1; this interaction allows the polyprotein trafficking to multivesicular bodies during virus assembly. Part of the pre-integration complex (PIC) which is composed of viral genome, matrix protein, Vpr and integrase. In terms of assembly, homodimer; the homodimer further multimerizes as homohexamers or homopentamers. Interacts with human PPIA/CYPA; This interaction stabilizes the capsid. Interacts with human NUP153. Interacts with host PDZD8; this interaction stabilizes the capsid. Interacts with monkey TRIM5; this interaction destabilizes the capsid. Homodimer, whose active site consists of two apposed aspartic acid residues. As to quaternary structure, heterodimer of p66 RT and p51 RT (RT p66/p51). Heterodimerization of RT is essential for DNA polymerase activity. The overall folding of the subdomains is similar in p66 RT and p51 RT but the spatial arrangements of the subdomains are dramatically different. In terms of assembly, homotetramer; may further associate as a homohexadecamer. Part of the pre-integration complex (PIC) which is composed of viral genome, matrix protein, Vpr and integrase. Interacts with human SMARCB1/INI1 and human PSIP1/LEDGF isoform 1. Interacts with human KPNA3; this interaction might play a role in nuclear import of the pre-integration complex. Interacts with human NUP153; this interaction might play a role in nuclear import of the pre-integration complex. The cofactor is Mg(2+). Specific enzymatic cleavages by the viral protease yield mature proteins. The protease is released by autocatalytic cleavage. The polyprotein is cleaved during and after budding, this process is termed maturation. Proteolytic cleavage of p66 RT removes the RNase H domain to yield the p51 RT subunit. Nucleocapsid protein p7 might be further cleaved after virus entry. In terms of processing, tyrosine phosphorylated presumably in the virion by a host kinase. Phosphorylation is apparently not a major regulator of membrane association. Post-translationally, phosphorylated possibly by host MAPK1; this phosphorylation is necessary for Pin1-mediated virion uncoating. Methylated by host PRMT6, impairing its function by reducing RNA annealing and the initiation of reverse transcription.

It localises to the host cell membrane. The protein localises to the host endosome. The protein resides in the host multivesicular body. It is found in the virion membrane. Its subcellular location is the host nucleus. It localises to the host cytoplasm. The protein localises to the virion. The catalysed reaction is Specific for a P1 residue that is hydrophobic, and P1' variable, but often Pro.. The enzyme catalyses Endohydrolysis of RNA in RNA/DNA hybrids. Three different cleavage modes: 1. sequence-specific internal cleavage of RNA. Human immunodeficiency virus type 1 and Moloney murine leukemia virus enzymes prefer to cleave the RNA strand one nucleotide away from the RNA-DNA junction. 2. RNA 5'-end directed cleavage 13-19 nucleotides from the RNA end. 3. DNA 3'-end directed cleavage 15-20 nucleotides away from the primer terminus.. It catalyses the reaction 3'-end directed exonucleolytic cleavage of viral RNA-DNA hybrid.. It carries out the reaction DNA(n) + a 2'-deoxyribonucleoside 5'-triphosphate = DNA(n+1) + diphosphate. With respect to regulation, protease: The viral protease is inhibited by many synthetic protease inhibitors (PIs), such as amprenavir, atazanavir, indinavir, loprinavir, nelfinavir, ritonavir and saquinavir. Use of protease inhibitors in tritherapy regimens permit more ambitious therapeutic strategies. Reverse transcriptase/ribonuclease H: RT can be inhibited either by nucleoside RT inhibitors (NRTIs) or by non nucleoside RT inhibitors (NNRTIs). NRTIs act as chain terminators, whereas NNRTIs inhibit DNA polymerization by binding a small hydrophobic pocket near the RT active site and inducing an allosteric change in this region. Classical NRTIs are abacavir, adefovir (PMEA), didanosine (ddI), lamivudine (3TC), stavudine (d4T), tenofovir (PMPA), zalcitabine (ddC), and zidovudine (AZT). Classical NNRTIs are atevirdine (BHAP U-87201E), delavirdine, efavirenz (DMP-266), emivirine (I-EBU), and nevirapine (BI-RG-587). The tritherapies used as a basic effective treatment of AIDS associate two NRTIs and one NNRTI. Its function is as follows. Mediates, with Gag polyprotein, the essential events in virion assembly, including binding the plasma membrane, making the protein-protein interactions necessary to create spherical particles, recruiting the viral Env proteins, and packaging the genomic RNA via direct interactions with the RNA packaging sequence (Psi). Gag-Pol polyprotein may regulate its own translation, by the binding genomic RNA in the 5'-UTR. At low concentration, the polyprotein would promote translation, whereas at high concentration, the polyprotein would encapsidate genomic RNA and then shut off translation. Functionally, targets the polyprotein to the plasma membrane via a multipartite membrane-binding signal, that includes its myristoylated N-terminus. Matrix protein is part of the pre-integration complex. Implicated in the release from host cell mediated by Vpu. Binds to RNA. Forms the conical core that encapsulates the genomic RNA-nucleocapsid complex in the virion. Most core are conical, with only 7% tubular. The core is constituted by capsid protein hexamer subunits. The core is disassembled soon after virion entry. Host restriction factors such as TRIM5-alpha or TRIMCyp bind retroviral capsids and cause premature capsid disassembly, leading to blocks in reverse transcription. Capsid restriction by TRIM5 is one of the factors which restricts HIV-1 to the human species. Host PIN1 apparently facilitates the virion uncoating. On the other hand, interactions with PDZD8 or CYPA stabilize the capsid. In terms of biological role, encapsulates and protects viral dimeric unspliced genomic RNA (gRNA). Binds these RNAs through its zinc fingers. Acts as a nucleic acid chaperone which is involved in rearangement of nucleic acid secondary structure during gRNA retrotranscription. Also facilitates template switch leading to recombination. As part of the polyprotein, participates in gRNA dimerization, packaging, tRNA incorporation and virion assembly. Its function is as follows. Aspartyl protease that mediates proteolytic cleavages of Gag and Gag-Pol polyproteins during or shortly after the release of the virion from the plasma membrane. Cleavages take place as an ordered, step-wise cascade to yield mature proteins. This process is called maturation. Displays maximal activity during the budding process just prior to particle release from the cell. Also cleaves Nef and Vif, probably concomitantly with viral structural proteins on maturation of virus particles. Hydrolyzes host EIF4GI and PABP1 in order to shut off the capped cellular mRNA translation. The resulting inhibition of cellular protein synthesis serves to ensure maximal viral gene expression and to evade host immune response. Also mediates cleavage of host YTHDF3. Mediates cleavage of host CARD8, thereby activating the CARD8 inflammasome, leading to the clearance of latent HIV-1 in patient CD4(+) T-cells after viral reactivation; in contrast, HIV-1 can evade CARD8-sensing when its protease remains inactive in infected cells prior to viral budding. Functionally, multifunctional enzyme that converts the viral RNA genome into dsDNA in the cytoplasm, shortly after virus entry into the cell. This enzyme displays a DNA polymerase activity that can copy either DNA or RNA templates, and a ribonuclease H (RNase H) activity that cleaves the RNA strand of RNA-DNA heteroduplexes in a partially processive 3' to 5' endonucleasic mode. Conversion of viral genomic RNA into dsDNA requires many steps. A tRNA(3)-Lys binds to the primer-binding site (PBS) situated at the 5'-end of the viral RNA. RT uses the 3' end of the tRNA primer to perform a short round of RNA-dependent minus-strand DNA synthesis. The reading proceeds through the U5 region and ends after the repeated (R) region which is present at both ends of viral RNA. The portion of the RNA-DNA heteroduplex is digested by the RNase H, resulting in a ssDNA product attached to the tRNA primer. This ssDNA/tRNA hybridizes with the identical R region situated at the 3' end of viral RNA. This template exchange, known as minus-strand DNA strong stop transfer, can be either intra- or intermolecular. RT uses the 3' end of this newly synthesized short ssDNA to perform the RNA-dependent minus-strand DNA synthesis of the whole template. RNase H digests the RNA template except for two polypurine tracts (PPTs) situated at the 5'-end and near the center of the genome. It is not clear if both polymerase and RNase H activities are simultaneous. RNase H probably can proceed both in a polymerase-dependent (RNA cut into small fragments by the same RT performing DNA synthesis) and a polymerase-independent mode (cleavage of remaining RNA fragments by free RTs). Secondly, RT performs DNA-directed plus-strand DNA synthesis using the PPTs that have not been removed by RNase H as primers. PPTs and tRNA primers are then removed by RNase H. The 3' and 5' ssDNA PBS regions hybridize to form a circular dsDNA intermediate. Strand displacement synthesis by RT to the PBS and PPT ends produces a blunt ended, linear dsDNA copy of the viral genome that includes long terminal repeats (LTRs) at both ends. Catalyzes viral DNA integration into the host chromosome, by performing a series of DNA cutting and joining reactions. This enzyme activity takes place after virion entry into a cell and reverse transcription of the RNA genome in dsDNA. The first step in the integration process is 3' processing. This step requires a complex comprising the viral genome, matrix protein, Vpr and integrase. This complex is called the pre-integration complex (PIC). The integrase protein removes 2 nucleotides from each 3' end of the viral DNA, leaving recessed CA OH's at the 3' ends. In the second step, the PIC enters cell nucleus. This process is mediated through integrase and Vpr proteins, and allows the virus to infect a non dividing cell. This ability to enter the nucleus is specific of lentiviruses, other retroviruses cannot and rely on cell division to access cell chromosomes. In the third step, termed strand transfer, the integrase protein joins the previously processed 3' ends to the 5' ends of strands of target cellular DNA at the site of integration. The 5'-ends are produced by integrase-catalyzed staggered cuts, 5 bp apart. A Y-shaped, gapped, recombination intermediate results, with the 5'-ends of the viral DNA strands and the 3' ends of target DNA strands remaining unjoined, flanking a gap of 5 bp. The last step is viral DNA integration into host chromosome. This involves host DNA repair synthesis in which the 5 bp gaps between the unjoined strands are filled in and then ligated. Since this process occurs at both cuts flanking the HIV genome, a 5 bp duplication of host DNA is produced at the ends of HIV-1 integration. Alternatively, Integrase may catalyze the excision of viral DNA just after strand transfer, this is termed disintegration. The sequence is that of Gag-Pol polyprotein (gag-pol) from Human immunodeficiency virus type 1 group M subtype A (isolate U455) (HIV-1).